We begin with the raw amino-acid sequence, 953 residues long: UvrABC system protein A (953 aa).

33–40 contacts ATP; that stretch reads GLSGSGKS. 2 consecutive ABC transporter domains span residues 320–599 and 619–949; these read WGST…EESI and GHDN…RYLK. 652-659 contacts ATP; the sequence is GVSGSGKS. The segment at 752–778 adopts a C4-type zinc-finger fold; sequence CEACQGDGLIKIEMHFLPDVYVKCDIC.

Belongs to the ABC transporter superfamily. UvrA family. In terms of assembly, forms a heterotetramer with UvrB during the search for lesions.

It is found in the cytoplasm. Functionally, the UvrABC repair system catalyzes the recognition and processing of DNA lesions. UvrA is an ATPase and a DNA-binding protein. A damage recognition complex composed of 2 UvrA and 2 UvrB subunits scans DNA for abnormalities. When the presence of a lesion has been verified by UvrB, the UvrA molecules dissociate. This Rickettsia typhi (strain ATCC VR-144 / Wilmington) protein is UvrABC system protein A.